Here is a 63-residue protein sequence, read N- to C-terminus: Actiflagelin (63 aa).

Disulfide bonds link cysteine 3–cysteine 24, cysteine 6–cysteine 11, cysteine 17–cysteine 39, cysteine 43–cysteine 55, and cysteine 56–cysteine 61. A Proline amide modification is found at proline 63.

Post-translationally, contains 5 disulfide bonds. In terms of tissue distribution, expressed by the venom gland.

The protein localises to the secreted. Unknown. In vitro, this toxin activates sperm motility when tested on OF1 male mice. The chain is Actiflagelin from Walterinnesia aegyptia (Desert black snake).